We begin with the raw amino-acid sequence, 100 residues long: MARRCELTGKAVQVGHLVSHSNRKTKCRFLPNLCNVTLQSDALGKRVRLRVTAHALRSVEHRGGLDAFLIKAGEGDLSQTARLLKREIHKKLAETPAAAA.

Belongs to the bacterial ribosomal protein bL28 family.

The chain is Large ribosomal subunit protein bL28 from Methylobacterium radiotolerans (strain ATCC 27329 / DSM 1819 / JCM 2831 / NBRC 15690 / NCIMB 10815 / 0-1).